The following is a 205-amino-acid chain: Outer-membrane lipoprotein carrier protein (205 aa).

An N-terminal signal peptide occupies residues 1–22 (MKKIVIVISILLTSFLSSAVSA).

This sequence belongs to the LolA family. In terms of assembly, monomer.

It is found in the periplasm. Its function is as follows. Participates in the translocation of lipoproteins from the inner membrane to the outer membrane. Only forms a complex with a lipoprotein if the residue after the N-terminal Cys is not an aspartate (The Asp acts as a targeting signal to indicate that the lipoprotein should stay in the inner membrane). The polypeptide is Outer-membrane lipoprotein carrier protein (Psychromonas ingrahamii (strain DSM 17664 / CCUG 51855 / 37)).